Reading from the N-terminus, the 276-residue chain is Formamidopyrimidine-DNA glycosylase (276 aa).

Residue Pro-2 is the Schiff-base intermediate with DNA of the active site. The active-site Proton donor is Glu-3. The Proton donor; for beta-elimination activity role is filled by Lys-60. DNA-binding residues include His-93 and Arg-112. The FPG-type zinc-finger motif lies at 240-274 (NVYGKKGEPCVTCGTILEKTVVGGRGTHYCPICQP). Arg-264 (proton donor; for delta-elimination activity) is an active-site residue.

Belongs to the FPG family. Monomer. Zn(2+) is required as a cofactor.

It carries out the reaction Hydrolysis of DNA containing ring-opened 7-methylguanine residues, releasing 2,6-diamino-4-hydroxy-5-(N-methyl)formamidopyrimidine.. The enzyme catalyses 2'-deoxyribonucleotide-(2'-deoxyribose 5'-phosphate)-2'-deoxyribonucleotide-DNA = a 3'-end 2'-deoxyribonucleotide-(2,3-dehydro-2,3-deoxyribose 5'-phosphate)-DNA + a 5'-end 5'-phospho-2'-deoxyribonucleoside-DNA + H(+). Functionally, involved in base excision repair of DNA damaged by oxidation or by mutagenic agents. Acts as a DNA glycosylase that recognizes and removes damaged bases. Has a preference for oxidized purines, such as 7,8-dihydro-8-oxoguanine (8-oxoG). Has AP (apurinic/apyrimidinic) lyase activity and introduces nicks in the DNA strand. Cleaves the DNA backbone by beta-delta elimination to generate a single-strand break at the site of the removed base with both 3'- and 5'-phosphates. The protein is Formamidopyrimidine-DNA glycosylase of Bacillus cereus (strain ATCC 14579 / DSM 31 / CCUG 7414 / JCM 2152 / NBRC 15305 / NCIMB 9373 / NCTC 2599 / NRRL B-3711).